A 555-amino-acid polypeptide reads, in one-letter code: Transcription factor kojR (555 aa).

Positions 21-47 (CETCKLRKRKCDGHEPCTYCLRYEYQC) form a DNA-binding region, zn(2)-C6 fungal-type. Positions 51–73 (PHPRRKPAASKSSARPSEEEDSP) are disordered.

Its subcellular location is the nucleus. Transcription factor that regulates the gene cluster that mediates the biosynthesis of 5-hydroxy-2-hydroxymethyl-1,4-pyrone, also know as kojic acid, a by-product in the fermentation process of malting rice that acts as a chelation agent. Mediates the expression of kojA and kojT via binding of an 11-nucleotide palindromic sequence, 5'-CGRCTWAGYCG-3' (R=A/G, W=A/T, Y=C/T) within the target gene promoters. The polypeptide is Transcription factor kojR (Aspergillus flavus (strain ATCC 200026 / FGSC A1120 / IAM 13836 / NRRL 3357 / JCM 12722 / SRRC 167)).